The sequence spans 143 residues: Nucleoside diphosphate kinase (143 aa).

Lys-11, Phe-59, Arg-87, Thr-93, Arg-104, and Asn-114 together coordinate ATP. Catalysis depends on His-117, which acts as the Pros-phosphohistidine intermediate.

This sequence belongs to the NDK family. Homotetramer. Requires Mg(2+) as cofactor.

It is found in the cytoplasm. The catalysed reaction is a 2'-deoxyribonucleoside 5'-diphosphate + ATP = a 2'-deoxyribonucleoside 5'-triphosphate + ADP. It catalyses the reaction a ribonucleoside 5'-diphosphate + ATP = a ribonucleoside 5'-triphosphate + ADP. Major role in the synthesis of nucleoside triphosphates other than ATP. The ATP gamma phosphate is transferred to the NDP beta phosphate via a ping-pong mechanism, using a phosphorylated active-site intermediate. This is Nucleoside diphosphate kinase from Psychrobacter cryohalolentis (strain ATCC BAA-1226 / DSM 17306 / VKM B-2378 / K5).